The following is a 581-amino-acid chain: Kelch-like protein 38 (581 aa).

The BTB domain occupies 34–101 (TDVSICAGAR…VYTGEAHIAT (68 aa)). Residues 136 to 237 (CLGMIRLSEI…HPAFFHHFIA (102 aa)) form the BACK domain. 6 Kelch repeats span residues 285-332 (FLIL…TLHR), 334-383 (IYVL…AHKN), 384-431 (FIFS…VKDQ), 433-479 (LYLF…VLGE), 480-521 (RIVI…VMGN), and 523-573 (LYVT…TLQC).

The sequence is that of Kelch-like protein 38 (KLHL38) from Homo sapiens (Human).